A 233-amino-acid chain; its full sequence is Zinc import ATP-binding protein ZnuC (233 aa).

Residues 6-222 (IEFRNVSKKF…SEFSNALSAL (217 aa)) enclose the ABC transporter domain. 38 to 45 (GPNGAGKT) is an ATP binding site.

It belongs to the ABC transporter superfamily. Zinc importer (TC 3.A.1.15.5) family. In terms of assembly, the complex is composed of two ATP-binding proteins (ZnuC), two transmembrane proteins (ZnuB) and a solute-binding protein (ZnuA).

It is found in the cell inner membrane. It carries out the reaction Zn(2+)(out) + ATP(in) + H2O(in) = Zn(2+)(in) + ADP(in) + phosphate(in) + H(+)(in). Functionally, part of the ABC transporter complex ZnuABC involved in zinc import. Responsible for energy coupling to the transport system. This is Zinc import ATP-binding protein ZnuC from Rickettsia conorii (strain ATCC VR-613 / Malish 7).